The following is a 148-amino-acid chain: MDVILLDKIGKLGNLGDQVAVKAGYGRNYLVPYGLAVPATKENVAAFEAQRAELEAQAAERKAEAEARAAQLSEIELSLVAKAGDEGKLFGSIGPRDLADALTQAGLDVVKSEVRMPEGPIRKTGEYDITLQLHAEVTSSVRIVVVAE.

Belongs to the bacterial ribosomal protein bL9 family.

Functionally, binds to the 23S rRNA. The chain is Large ribosomal subunit protein bL9 from Chromohalobacter salexigens (strain ATCC BAA-138 / DSM 3043 / CIP 106854 / NCIMB 13768 / 1H11).